The following is a 421-amino-acid chain: Putative zinc finger protein R05D3.3 (421 aa).

2 C2H2-type zinc fingers span residues 207–228 (VLCVICNEWICSRNRKNHIEAH) and 234–257 (YKCSACSYARRREIFVDQHIRTQH). The interval 400–421 (GSSITDSNEPGPSEIKKELAEV) is disordered.

The protein localises to the nucleus. This chain is Putative zinc finger protein R05D3.3, found in Caenorhabditis elegans.